The chain runs to 1263 residues: Kinesin-like protein KIN-12E (1263 aa).

The segment at 21–44 (PAPSESLRSVPCTPEANTVSRDNH) is disordered. Residues 35-44 (EANTVSRDNH) are compositionally biased toward polar residues. In terms of domain architecture, Kinesin motor spans 93–430 (NVQVIIRTRP…LKFAQRAKLI (338 aa)). ATP is bound at residue 174-181 (GQTGSGKT). Coiled coils occupy residues 679–737 (SKKL…KIRS), 764–805 (AEAH…AEEN), 831–881 (ALEV…KRLL), 905–966 (SEKS…HQSE), 1091–1168 (TDLL…TIQE), and 1193–1251 (LRKE…VLSL).

Belongs to the TRAFAC class myosin-kinesin ATPase superfamily. Kinesin family. KIN-12 subfamily.

In Arabidopsis thaliana (Mouse-ear cress), this protein is Kinesin-like protein KIN-12E.